A 132-amino-acid chain; its full sequence is Agouti-signaling protein (132 aa).

The first 22 residues, 1-22 (MDVTRLLLATLLVFLCFFTAYS), serve as a signal peptide directing secretion. A glycan (N-linked (GlcNAc...) asparagine) is linked at Asn-39. The disordered stretch occupies residues 58–88 (KSKQMSRKEAEKKRSSKKEASMKKVARPRTP). A compositionally biased stretch (basic and acidic residues) spans 63-79 (SRKEAEKKRSSKKEASM). Disulfide bonds link Cys-93–Cys-108, Cys-100–Cys-114, Cys-107–Cys-125, Cys-111–Cys-132, and Cys-116–Cys-123. The Agouti domain occupies 93–132 (CVATRDSCKPPAPACCDPCASCQCRFFRSACSCRVLSLNC).

It localises to the secreted. In terms of biological role, involved in the regulation of melanogenesis. The binding of ASP to MC1R precludes alpha-MSH initiated signaling and thus blocks production of cAMP, leading to a down-regulation of eumelanogenesis (brown/black pigment) and thus increasing synthesis of pheomelanin (yellow/red pigment). In Cercopithecus mitis (Blue monkey), this protein is Agouti-signaling protein (ASIP).